The chain runs to 199 residues: Ribosome maturation factor RimM (199 aa).

The PRC barrel domain maps to 100–195 (ADEWYPKDLI…YLTLDPPGGL (96 aa)).

This sequence belongs to the RimM family. In terms of assembly, binds ribosomal protein uS19.

The protein localises to the cytoplasm. In terms of biological role, an accessory protein needed during the final step in the assembly of 30S ribosomal subunit, possibly for assembly of the head region. Essential for efficient processing of 16S rRNA. May be needed both before and after RbfA during the maturation of 16S rRNA. It has affinity for free ribosomal 30S subunits but not for 70S ribosomes. The sequence is that of Ribosome maturation factor RimM from Bifidobacterium longum (strain DJO10A).